The chain runs to 457 residues: Aromatic amino acid transport protein AroP (457 aa).

At 1 to 19 (MMEGQQHGEQLKRGLKNRH) the chain is on the cytoplasmic side. A helical membrane pass occupies residues 20-40 (IQLIALGGAIGTGLFLGSASV). Topologically, residues 41-42 (IQ) are periplasmic. Residues 43–63 (SAGPGIILGYAIAGFIAFLIM) traverse the membrane as a helical segment. Residues 64–86 (RQLGEMVVEEPVAGSFSHFAYKY) are Cytoplasmic-facing. A helical membrane pass occupies residues 87–107 (WGSFAGFASGWNYWVLYVLVA). Over 108–117 (MAELTAVGKY) the chain is Periplasmic. The chain crosses the membrane as a helical span at residues 118-138 (IQFWYPEIPTWVSAAVFFVVI). The Cytoplasmic segment spans residues 139–155 (NAINLTNVTVFGEMEFW). The chain crosses the membrane as a helical span at residues 156–176 (FAIIKVIAVVAMIIFGGWLLF). Residues 177-201 (SGNGGPQASVSNLWDQGGFLPHGFT) are Periplasmic-facing. The helical transmembrane segment at 202–222 (GLVMMMAIIMFSFGGLELVGI) threads the bilayer. Topologically, residues 223–240 (TAAEADNPEQSIPKATNQ) are cytoplasmic. Residues 241–261 (VIYRILIFYIGSLAVLLSLMP) form a helical membrane-spanning segment. Topologically, residues 262–271 (WTRVTADTSP) are periplasmic. Residues 272-292 (FVLIFHELGDTFVANALNIVV) traverse the membrane as a helical segment. At 293–333 (LTAALSVYNSCVYCNSRMLFGLAQQGNAPKALASVDKRGVP) the chain is on the cytoplasmic side. Residues 334–354 (VNTILVSALVTALCVLINYLA) traverse the membrane as a helical segment. Residues 355 to 358 (PESA) are Periplasmic-facing. Residues 359-379 (FGLLMALVVSALVINWAMISL) traverse the membrane as a helical segment. The Cytoplasmic portion of the chain corresponds to 380–407 (AHMKFRRAKQEQGVVTRFPALLYPLGNW). The chain crosses the membrane as a helical span at residues 408-428 (ICLLFMAVVLVIMLMTPGMAI). A topological domain (periplasmic) is located at residue Ser429. The chain crosses the membrane as a helical span at residues 430–450 (VYLIPVWLVVLGIGYLFKEKT). At 451-457 (AKAVKAH) the chain is on the cytoplasmic side.

It belongs to the amino acid-polyamine-organocation (APC) superfamily. Amino acid transporter (AAT) (TC 2.A.3.1) family.

Its subcellular location is the cell inner membrane. The enzyme catalyses L-phenylalanine(in) + H(+)(in) = L-phenylalanine(out) + H(+)(out). It catalyses the reaction L-tryptophan(in) + H(+)(in) = L-tryptophan(out) + H(+)(out). It carries out the reaction L-tyrosine(in) + H(+)(in) = L-tyrosine(out) + H(+)(out). Permease that is involved in the active transport across the cytoplasmic membrane of all three aromatic amino acids, phenylalanine, tyrosine and tryptophan. This chain is Aromatic amino acid transport protein AroP (aroP), found in Escherichia coli O157:H7.